Reading from the N-terminus, the 548-residue chain is uncharacterized protein (548 aa).

One can recognise a DhaL domain in the interval 8–200 (KLFADMIIQG…LLCVYEGFLK (193 aa)).

This is an uncharacterized protein from Staphylococcus aureus (strain MRSA252).